Consider the following 398-residue polypeptide: MADLDQVLAEIRRGTDEILLESDLLEKLKKGRPLRIKLGADPTAPDIHLGHTVILNKLRLFQELGHEVIFLIGDFTGMVGDPSGKNSTRPPLTREQVLANAETYKEQVYKILDPAKTRIEFNSSWLEPLGAAGMIRLASQQTVARMMERDDFKKRYASGQSIAIHEFMYPLLQGYDSVALKADVELGGTDQKFNLLMGRELQKAEGQKPQAVIMMPLLEGLDGVKKMSKSAHNYIGVSEPANEMFGKIMSISDELMWRYFELLSFRPLAEIEQFKQDIANGANPRDTKISLAKEIIARFHDAAAAESAHQAFIDRFQKGAIPDDIPEVELAAGEGLAIANLLKDADLVGSTSDALRMIKQGAVKMDGEKIDDSRMTLSAGTVAVFQVGKRKFAKVTLV.

Residues Pro42 to His51 carry the 'HIGH' region motif. Residues Lys226–Ser230 carry the 'KMSKS' region motif. Residue Lys229 participates in ATP binding. Residues Leu336–Leu397 form the S4 RNA-binding domain.

Belongs to the class-I aminoacyl-tRNA synthetase family. TyrS type 2 subfamily. In terms of assembly, homodimer.

It localises to the cytoplasm. It catalyses the reaction tRNA(Tyr) + L-tyrosine + ATP = L-tyrosyl-tRNA(Tyr) + AMP + diphosphate + H(+). In terms of biological role, catalyzes the attachment of tyrosine to tRNA(Tyr) in a two-step reaction: tyrosine is first activated by ATP to form Tyr-AMP and then transferred to the acceptor end of tRNA(Tyr). This chain is Tyrosine--tRNA ligase, found in Shewanella oneidensis (strain ATCC 700550 / JCM 31522 / CIP 106686 / LMG 19005 / NCIMB 14063 / MR-1).